The sequence spans 989 residues: Atos homolog protein A (989 aa).

Residues 24-32 (TLLITEGRT) form a transactivation domain 1 (TAD1) region. 4 disordered regions span residues 244-295 (GEGG…LPPG), 393-477 (PDAL…KPAT), 525-639 (QNEQ…GLTQ), and 656-686 (EAEK…TPAN). The span at 254–270 (RSSLRLPRSPLFSRSLH) shows a compositional bias: low complexity. The span at 397-412 (FTSQEPPGHKTTWNST) shows a compositional bias: polar residues. Basic and acidic residues-rich tracts occupy residues 413-423 (QDKECLKKSKD) and 460-471 (TRLDRVDRESKT). 2 stretches are compositionally biased toward polar residues: residues 525–544 (QNEQ…VSLS) and 600–638 (TKSQ…NGLT). Residues 656 to 675 (EAEKHVRDGSTCLEKDENQE) are compositionally biased toward basic and acidic residues. Positions 676–686 (PHSSLSSTPAN) are enriched in polar residues. A required for macropage invasion region spans residues 792 to 849 (LLGNFEECVLNYRLEPLGTVEGFTAEVGASGTFCPSHMTLPVDVSFYSVSDDNAPSPY). The transactivation domain 2 (TAD2) stretch occupies residues 876 to 884 (FNPNKTVVK).

This sequence belongs to the ATOS family.

The protein localises to the nucleus. Transcription regulator that syncronizes transcriptional and translational programs to promote macrophage invasion of tissues. The sequence is that of Atos homolog protein A (atosa) from Danio rerio (Zebrafish).